We begin with the raw amino-acid sequence, 61 residues long: Small ribosomal subunit protein uS14 (61 aa).

Residues cysteine 24, cysteine 27, cysteine 40, and cysteine 43 each coordinate Zn(2+).

This sequence belongs to the universal ribosomal protein uS14 family. Zinc-binding uS14 subfamily. In terms of assembly, part of the 30S ribosomal subunit. Contacts proteins S3 and S10. It depends on Zn(2+) as a cofactor.

Functionally, binds 16S rRNA, required for the assembly of 30S particles and may also be responsible for determining the conformation of the 16S rRNA at the A site. This chain is Small ribosomal subunit protein uS14, found in Parafrankia sp. (strain EAN1pec).